Reading from the N-terminus, the 821-residue chain is Putative outer membrane usher protein YqiG (821 aa).

A signal peptide spans 1–20 (MSGNIGANPVIIIGCASAYA). A disulfide bridge links C798 with C817.

This sequence belongs to the fimbrial export usher family.

It localises to the cell outer membrane. Functionally, may be involved in H(2) production during fermentative growth. Involved in the export and assembly of a fimbrial subunit across the outer membrane. The protein is Putative outer membrane usher protein YqiG (yqiG) of Escherichia coli (strain K12).